We begin with the raw amino-acid sequence, 235 residues long: Phosphatidylserine decarboxylase proenzyme (235 aa).

The active-site Schiff-base intermediate with substrate; via pyruvic acid is Ser-204. Position 204 is a pyruvic acid (Ser); by autocatalysis (Ser-204).

Belongs to the phosphatidylserine decarboxylase family. PSD-A subfamily. As to quaternary structure, heterodimer of a large membrane-associated beta subunit and a small pyruvoyl-containing alpha subunit. Requires pyruvate as cofactor. Post-translationally, is synthesized initially as an inactive proenzyme. Formation of the active enzyme involves a self-maturation process in which the active site pyruvoyl group is generated from an internal serine residue via an autocatalytic post-translational modification. Two non-identical subunits are generated from the proenzyme in this reaction, and the pyruvate is formed at the N-terminus of the alpha chain, which is derived from the carboxyl end of the proenzyme. The post-translation cleavage follows an unusual pathway, termed non-hydrolytic serinolysis, in which the side chain hydroxyl group of the serine supplies its oxygen atom to form the C-terminus of the beta chain, while the remainder of the serine residue undergoes an oxidative deamination to produce ammonia and the pyruvoyl prosthetic group on the alpha chain.

It is found in the cell membrane. It catalyses the reaction a 1,2-diacyl-sn-glycero-3-phospho-L-serine + H(+) = a 1,2-diacyl-sn-glycero-3-phosphoethanolamine + CO2. It participates in phospholipid metabolism; phosphatidylethanolamine biosynthesis; phosphatidylethanolamine from CDP-diacylglycerol: step 2/2. Its function is as follows. Catalyzes the formation of phosphatidylethanolamine (PtdEtn) from phosphatidylserine (PtdSer). The sequence is that of Phosphatidylserine decarboxylase proenzyme from Mycobacterium sp. (strain KMS).